The primary structure comprises 138 residues: MRTLWIMAVLLVGVEGSLVELGKMILQETGKNPLTSYGAYGCNCGVGGRGKPKDATDRCCYVHKCCYKKMTDCDPKKDRYSYSWKDKTIVCGEKNSCLKELCECDKAVAICLRENLDTYNKKYKNNYLKPFCKKADAC.

The first 16 residues, 1–16, serve as a signal peptide directing secretion; that stretch reads MRTLWIMAVLLVGVEG. 7 cysteine pairs are disulfide-bonded: cysteine 42-cysteine 132, cysteine 44-cysteine 60, cysteine 59-cysteine 111, cysteine 65-cysteine 138, cysteine 66-cysteine 104, cysteine 73-cysteine 97, and cysteine 91-cysteine 102. The interval 121–134 is important for membrane-damaging activities in eukaryotes and bacteria; heparin-binding; that stretch reads KKYKNNYLKPFCKK.

Belongs to the phospholipase A2 family. Group II subfamily. K49 sub-subfamily. Homodimer; non-covalently linked (probable alternative/compact dimer conformation in solution). Expressed by the venom gland.

It is found in the secreted. In terms of biological role, snake venom phospholipase A2 homolog that lacks enzymatic and anticoagulant activities. In mice, it induces conspicuous local myonecrosis, edema, and a systemic interleukin-6 response. In vitro, it is cytolytic upon myoblasts, and weakly bactericidal. A model of myotoxic mechanism has been proposed: an apo Lys49-PLA2 is activated by the entrance of a hydrophobic molecule (e.g. fatty acid) at the hydrophobic channel of the protein leading to a reorientation of a monomer. This reorientation causes a transition between 'inactive' to 'active' states, causing alignment of C-terminal and membrane-docking sites (MDoS) side-by-side and putting the membrane-disruption sites (MDiS) in the same plane, exposed to solvent and in a symmetric position for both monomers. The MDoS region stabilizes the toxin on membrane by the interaction of charged residues with phospholipid head groups. Subsequently, the MDiS region destabilizes the membrane with penetration of hydrophobic residues. This insertion causes a disorganization of the membrane, allowing an uncontrolled influx of ions (i.e. calcium and sodium), and eventually triggering irreversible intracellular alterations and cell death. The chain is Phospholipase A2 homolog 1 from Bothrops atrox (Barba amarilla).